The primary structure comprises 400 residues: LIM/homeobox protein Lhx3 (400 aa).

2 consecutive LIM zinc-binding domains span residues 34–84 (CAGC…CKDD) and 93–147 (CAAC…CKAD). Ser74 is modified (phosphoserine). Positions 160–219 (AKRPRTTITAKQLETLKSAYNTSPKPARHVREQLSSETGLDMRVVQVWFQNRRAKEKRLK) form a DNA-binding region, homeobox. Disordered stretches follow at residues 215–280 (EKRL…SSLG) and 297–400 (TLDH…HAQF). Tyr230 carries the post-translational modification Phosphotyrosine. A phosphoserine mark is found at Ser237 and Ser241. 2 stretches are compositionally biased toward pro residues: residues 319–334 (GIPP…PGPQ) and 352–361 (SGPPGGPPPM). Positions 368–380 (GPSSDLSTESSSG) are enriched in polar residues.

As to quaternary structure, interacts with POU1F1. At neuronal promoters, interacts with LDB1, in motor neurons LDB1 is displaced by ISL1 and a ternary complex is formed in which ISL1 contacts both LHX3 and LDB1; allosteric structural changes in the DNA binding domain of LHX3, induced by the ISL1-LHX3 interaction, may explain differences in sequence specificity of the different complexes. Interacts with LDB2. May interact with CITED2/MRG1. As to expression, mostly expressed in the pituitary anterior and intermediate lobes. It is also expressed in the pineal gland and transiently in the primordia of motor neurons including the spinal cord, pons and medulla oblongata.

It is found in the nucleus. Functionally, transcription factor. Recognizes and binds to the consensus sequence motif 5'-AATTAATTA-3' in the regulatory elements of target genes, such as glycoprotein hormones alpha chain CGA and visual system homeobox CHX10, positively modulating transcription; transcription can be co-activated by LDB2. Synergistically enhances transcription from the prolactin promoter in cooperation with POU1F1/Pit-1. Required for the establishment of the specialized cells of the pituitary gland and the nervous system. Involved in the development of interneurons and motor neurons in cooperation with LDB1 and ISL1. The sequence is that of LIM/homeobox protein Lhx3 (Lhx3) from Mus musculus (Mouse).